The primary structure comprises 428 residues: Putative aminotransferase MSMEG_6286/MSMEI_6121 (428 aa).

G37 contributes to the substrate binding site. Pyridoxal 5'-phosphate is bound by residues Y72, 102 to 105, N191, 222 to 225, and 256 to 258; these read ASLE, AYAV, and STS. An Isoglutamyl lysine isopeptide (Lys-Gln) (interchain with Q-Cter in protein Pup) cross-link involves residue K339.

The protein belongs to the class-I pyridoxal-phosphate-dependent aminotransferase family. Requires pyridoxal 5'-phosphate as cofactor.

The chain is Putative aminotransferase MSMEG_6286/MSMEI_6121 from Mycolicibacterium smegmatis (strain ATCC 700084 / mc(2)155) (Mycobacterium smegmatis).